The sequence spans 324 residues: MIFVTLEHILTHISFSIISVVIIIQLMTFFVHEIPALSDSLEKGMIATFLSITGLLIIRWIYSGHFPLSNLYESLMFLSWSFAIIHMIPKIWNHKNKNYLSAITIPSAIFTQAFATSGLSTEMHESGILVPALRSHWLMMHVSMMLLSYAALLVGSLFSIALLVITFRKNGKLVVENQNLLIGSSFFDQMDYLNFNENINVLENPSFSSSFKNYYKYQLVERLDYWSSRVISIGFSFLTIGILSGAVWANEAWGSYWNWDPKETWAFITWTIYAIYSHTRTTKNGQGANSAIVASIGFFIIWICYFGVNLLGIGLHSYGSFILS.

The next 8 helical transmembrane spans lie at 17–37, 44–64, 68–88, 99–119, 145–165, 230–250, 264–278, and 291–311; these read IISV…IPAL, GMIA…IYSG, LSNL…IHMI, YLSA…TSGL, MLLS…LLVI, VISI…VWAN, TWAF…IYSH, and AIVA…VNLL.

The protein belongs to the CcmF/CycK/Ccl1/NrfE/CcsA family. As to quaternary structure, may interact with Ccs1.

It localises to the plastid. Its subcellular location is the chloroplast thylakoid membrane. Required during biogenesis of c-type cytochromes (cytochrome c6 and cytochrome f) at the step of heme attachment. This Lemna minor (Common duckweed) protein is Cytochrome c biogenesis protein CcsA.